The sequence spans 342 residues: UDP-3-O-acylglucosamine N-acyltransferase (342 aa).

His-242 functions as the Proton acceptor in the catalytic mechanism.

The protein belongs to the transferase hexapeptide repeat family. LpxD subfamily. In terms of assembly, homotrimer.

The catalysed reaction is a UDP-3-O-[(3R)-3-hydroxyacyl]-alpha-D-glucosamine + a (3R)-hydroxyacyl-[ACP] = a UDP-2-N,3-O-bis[(3R)-3-hydroxyacyl]-alpha-D-glucosamine + holo-[ACP] + H(+). Its pathway is bacterial outer membrane biogenesis; LPS lipid A biosynthesis. Catalyzes the N-acylation of UDP-3-O-acylglucosamine using 3-hydroxyacyl-ACP as the acyl donor. Is involved in the biosynthesis of lipid A, a phosphorylated glycolipid that anchors the lipopolysaccharide to the outer membrane of the cell. This Leptothrix cholodnii (strain ATCC 51168 / LMG 8142 / SP-6) (Leptothrix discophora (strain SP-6)) protein is UDP-3-O-acylglucosamine N-acyltransferase.